We begin with the raw amino-acid sequence, 802 residues long: ATP-dependent zinc metalloprotease FTSH 7, chloroplastic (802 aa).

The transit peptide at Met1–Pro55 directs the protein to the chloroplast. Residues Cys87–Lys117 are disordered. The span at Gln88–Ser102 shows a compositional bias: acidic residues. 2 consecutive transmembrane segments (helical) span residues Ile134 to Met154 and Gly268 to Ile288. Residue Gly365–Thr372 participates in ATP binding. Position 590 (His590) interacts with Zn(2+). Glu591 is an active-site residue. His594 and Asp673 together coordinate Zn(2+).

This sequence in the N-terminal section; belongs to the AAA ATPase family. It in the C-terminal section; belongs to the peptidase M41 family. Zn(2+) serves as cofactor.

It is found in the plastid. The protein resides in the chloroplast thylakoid membrane. In terms of biological role, probable ATP-dependent zinc metallopeptidase. The chain is ATP-dependent zinc metalloprotease FTSH 7, chloroplastic (FTSH7) from Arabidopsis thaliana (Mouse-ear cress).